The following is a 360-amino-acid chain: MLVYLAEYLTRFHTGFNVFSYVTFRAILGLLTALVFSLWFGPKLIERLQLLQIGQVVRNDGPESHFSKRGTPTMGGLLILAAIFISVLLWGDLGSRYVWVMLFVLGSFGLIGFIDDYRKVVRKDTKGLIARWKYILQSLAALLIAFFLYATAANPGETQLVVPFFKDVMPQLGAVFIVLAYFTIVGSSNAVNLTDGLDGLAIMPTVMVAAAFALIAYLSGHAQFANYLHIPHLPGSGELVIVCTAIVGAGLGFLWFNTYPAQVFMGDVGSLSLGAALGTIAVLVRQEILLVIMGGVFVMETLSVILQVGSYKLRGQRIFRMAPIHHHYELKGWPEPRVIVRFWIISIFLVLLGLATLKLR.

A run of 10 helical transmembrane segments spans residues 26 to 46 (AILG…KLIE), 74 to 94 (MGGL…GDLG), 97 to 117 (YVWV…IDDY), 134 to 154 (YILQ…TAAN), 168 to 188 (VMPQ…VGSS), 199 to 219 (GLAI…AYLS), 236 to 256 (SGEL…FLWF), 263 to 283 (VFMG…IAVL), 288 to 308 (ILLV…ILQV), and 338 to 358 (VIVR…ATLK).

This sequence belongs to the glycosyltransferase 4 family. MraY subfamily. It depends on Mg(2+) as a cofactor.

It localises to the cell inner membrane. It carries out the reaction UDP-N-acetyl-alpha-D-muramoyl-L-alanyl-gamma-D-glutamyl-meso-2,6-diaminopimeloyl-D-alanyl-D-alanine + di-trans,octa-cis-undecaprenyl phosphate = di-trans,octa-cis-undecaprenyl diphospho-N-acetyl-alpha-D-muramoyl-L-alanyl-D-glutamyl-meso-2,6-diaminopimeloyl-D-alanyl-D-alanine + UMP. Its pathway is cell wall biogenesis; peptidoglycan biosynthesis. Functionally, catalyzes the initial step of the lipid cycle reactions in the biosynthesis of the cell wall peptidoglycan: transfers peptidoglycan precursor phospho-MurNAc-pentapeptide from UDP-MurNAc-pentapeptide onto the lipid carrier undecaprenyl phosphate, yielding undecaprenyl-pyrophosphoryl-MurNAc-pentapeptide, known as lipid I. This chain is Phospho-N-acetylmuramoyl-pentapeptide-transferase, found in Shewanella baltica (strain OS195).